Here is a 299-residue protein sequence, read N- to C-terminus: MKNKNQMKVEKILRLPSWIKFPISKASEFEKMQRLIRKSNIHTICEEGRCPNRAECYASGTATFLLGGSICSRACAFCQVNKGKPSEINKYESIQVAEAVKILNLKYVVLTSVARDDLPDHGANLFVSTINQIRKIDPKIQIEVLTPDLWGGGKSFEDKDKLQKDRLKKILEQRPICFNHNLETVERLQKEVRRGANYKNSIGLLEKAKSIAPNIQTKSGIMLGLGETLKEIETTILDLKKVDCNQITIGQYLRPSLKHLSVKKYWAPKEFEYLKSFCSKLGFKKVSCGPLVRSSYHAG.

[4Fe-4S] cluster is bound by residues Cys45, Cys50, Cys56, Cys71, Cys75, Cys78, and Ser295. Residues 57–284 enclose the Radical SAM core domain; the sequence is YASGTATFLL…KSFCSKLGFK (228 aa).

Belongs to the radical SAM superfamily. Lipoyl synthase family. Requires [4Fe-4S] cluster as cofactor.

The protein resides in the cytoplasm. The catalysed reaction is [[Fe-S] cluster scaffold protein carrying a second [4Fe-4S](2+) cluster] + N(6)-octanoyl-L-lysyl-[protein] + 2 oxidized [2Fe-2S]-[ferredoxin] + 2 S-adenosyl-L-methionine + 4 H(+) = [[Fe-S] cluster scaffold protein] + N(6)-[(R)-dihydrolipoyl]-L-lysyl-[protein] + 4 Fe(3+) + 2 hydrogen sulfide + 2 5'-deoxyadenosine + 2 L-methionine + 2 reduced [2Fe-2S]-[ferredoxin]. It participates in protein modification; protein lipoylation via endogenous pathway; protein N(6)-(lipoyl)lysine from octanoyl-[acyl-carrier-protein]: step 2/2. Catalyzes the radical-mediated insertion of two sulfur atoms into the C-6 and C-8 positions of the octanoyl moiety bound to the lipoyl domains of lipoate-dependent enzymes, thereby converting the octanoylated domains into lipoylated derivatives. The polypeptide is Lipoyl synthase 2 (Prochlorococcus marinus subsp. pastoris (strain CCMP1986 / NIES-2087 / MED4)).